The primary structure comprises 703 residues: Elongation factor G (703 aa).

Positions 8–290 (ARYRNIGICA…AVIEYLPAPT (283 aa)) constitute a tr-type G domain. GTP is bound by residues 17–24 (AHVDAGKT), 88–92 (DTPGH), and 142–145 (NKMD).

It belongs to the TRAFAC class translation factor GTPase superfamily. Classic translation factor GTPase family. EF-G/EF-2 subfamily.

The protein localises to the cytoplasm. Catalyzes the GTP-dependent ribosomal translocation step during translation elongation. During this step, the ribosome changes from the pre-translocational (PRE) to the post-translocational (POST) state as the newly formed A-site-bound peptidyl-tRNA and P-site-bound deacylated tRNA move to the P and E sites, respectively. Catalyzes the coordinated movement of the two tRNA molecules, the mRNA and conformational changes in the ribosome. The polypeptide is Elongation factor G (Teredinibacter turnerae (strain ATCC 39867 / T7901)).